The following is a 194-amino-acid chain: Elongation factor P (194 aa).

This sequence belongs to the elongation factor P family.

It localises to the cytoplasm. The protein operates within protein biosynthesis; polypeptide chain elongation. In terms of biological role, involved in peptide bond synthesis. Stimulates efficient translation and peptide-bond synthesis on native or reconstituted 70S ribosomes in vitro. Probably functions indirectly by altering the affinity of the ribosome for aminoacyl-tRNA, thus increasing their reactivity as acceptors for peptidyl transferase. The sequence is that of Elongation factor P from Hydrogenobaculum sp. (strain Y04AAS1).